The following is a 269-amino-acid chain: uncharacterized protein (269 aa).

This is an uncharacterized protein from Acanthamoeba polyphaga (Amoeba).